Consider the following 437-residue polypeptide: Glutamyl-tRNA reductase (437 aa).

Residues 46–49 (TCNR), serine 111, 116–118 (ERE), and glutamine 122 contribute to the substrate site. Catalysis depends on cysteine 47, which acts as the Nucleophile. Residue 192–197 (GTGAYA) participates in NADP(+) binding. Residues 413–437 (PDVPEETAPSTRQDPSDTPRPRAVG) form a disordered region. The segment covering 426-437 (DPSDTPRPRAVG) has biased composition (basic and acidic residues).

It belongs to the glutamyl-tRNA reductase family. As to quaternary structure, homodimer.

The enzyme catalyses (S)-4-amino-5-oxopentanoate + tRNA(Glu) + NADP(+) = L-glutamyl-tRNA(Glu) + NADPH + H(+). The protein operates within porphyrin-containing compound metabolism; protoporphyrin-IX biosynthesis; 5-aminolevulinate from L-glutamyl-tRNA(Glu): step 1/2. In terms of biological role, catalyzes the NADPH-dependent reduction of glutamyl-tRNA(Glu) to glutamate 1-semialdehyde (GSA). The chain is Glutamyl-tRNA reductase from Kocuria rhizophila (strain ATCC 9341 / DSM 348 / NBRC 103217 / DC2201).